Consider the following 317-residue polypeptide: Pinoresinol reductase 1 (317 aa).

NADP(+) is bound by residues Thr18, Tyr20, Ile21, Arg41, Lys50, Ser90, Gly91, Arg95, Asn98, Ser121, and Glu122. Met125 is a binding site for (-)-pinoresinol. NADP(+)-binding residues include Lys144 and Phe166. Lys144 (proton acceptor) is an active-site residue. Residues Met177 and Val178 each coordinate (-)-pinoresinol.

It belongs to the NmrA-type oxidoreductase family. Isoflavone reductase subfamily. Forms homodimers. As to expression, expressed in roots and stems.

The enzyme catalyses (-)-lariciresinol + NADP(+) = (-)-pinoresinol + NADPH + H(+). It carries out the reaction (+)-lariciresinol + NADP(+) = (+)-pinoresinol + NADPH + H(+). Functionally, reductase involved in lignan biosynthesis. Involved in secondary cell wall biosynthesis in fiber cells. Unlike conventional pinoresinol reductases that can reduce both pinoresinol and lariciresinol, PRR1 shows a strict substrate preference toward pinoresinol. Active on both (+) and (-)-pinoresinol. Abstracts the 4R-hydride from the NADPH cofactor during catalysis. This is Pinoresinol reductase 1 from Arabidopsis thaliana (Mouse-ear cress).